A 156-amino-acid polypeptide reads, in one-letter code: Small ribosomal subunit protein uS7 (156 aa).

The protein belongs to the universal ribosomal protein uS7 family. In terms of assembly, part of the 30S ribosomal subunit. Contacts proteins S9 and S11.

Functionally, one of the primary rRNA binding proteins, it binds directly to 16S rRNA where it nucleates assembly of the head domain of the 30S subunit. Is located at the subunit interface close to the decoding center, probably blocks exit of the E-site tRNA. The protein is Small ribosomal subunit protein uS7 of Salmonella agona (strain SL483).